A 156-amino-acid polypeptide reads, in one-letter code: Small ribosomal subunit protein uS7 (156 aa).

This sequence belongs to the universal ribosomal protein uS7 family. As to quaternary structure, part of the 30S ribosomal subunit. Contacts proteins S9 and S11.

Functionally, one of the primary rRNA binding proteins, it binds directly to 16S rRNA where it nucleates assembly of the head domain of the 30S subunit. Is located at the subunit interface close to the decoding center, probably blocks exit of the E-site tRNA. This is Small ribosomal subunit protein uS7 from Pseudomonas aeruginosa (strain LESB58).